Reading from the N-terminus, the 411-residue chain is Gamma-glutamyl phosphate reductase (411 aa).

The protein belongs to the gamma-glutamyl phosphate reductase family.

It localises to the cytoplasm. The catalysed reaction is L-glutamate 5-semialdehyde + phosphate + NADP(+) = L-glutamyl 5-phosphate + NADPH + H(+). It functions in the pathway amino-acid biosynthesis; L-proline biosynthesis; L-glutamate 5-semialdehyde from L-glutamate: step 2/2. Its function is as follows. Catalyzes the NADPH-dependent reduction of L-glutamate 5-phosphate into L-glutamate 5-semialdehyde and phosphate. The product spontaneously undergoes cyclization to form 1-pyrroline-5-carboxylate. This Nautilia profundicola (strain ATCC BAA-1463 / DSM 18972 / AmH) protein is Gamma-glutamyl phosphate reductase.